A 213-amino-acid chain; its full sequence is N-(5'-phosphoribosyl)anthranilate isomerase (213 aa).

This sequence belongs to the TrpF family.

The catalysed reaction is N-(5-phospho-beta-D-ribosyl)anthranilate = 1-(2-carboxyphenylamino)-1-deoxy-D-ribulose 5-phosphate. It functions in the pathway amino-acid biosynthesis; L-tryptophan biosynthesis; L-tryptophan from chorismate: step 3/5. The protein is N-(5'-phosphoribosyl)anthranilate isomerase of Rhodopseudomonas palustris (strain ATCC BAA-98 / CGA009).